The chain runs to 367 residues: D-alanine--D-alanine ligase (367 aa).

One can recognise an ATP-grasp domain in the interval 148–357 (KMAFEQAGLP…FPELVDKLVQ (210 aa)). 184-239 (EASLGYPCFVKPANLGSSVGISKVRSRQELEDALDNAANYDRRIIVEAGVVAREVE) contributes to the ATP binding site. Mg(2+)-binding residues include aspartate 310, glutamate 324, and asparagine 326.

This sequence belongs to the D-alanine--D-alanine ligase family. The cofactor is Mg(2+). It depends on Mn(2+) as a cofactor.

It is found in the cytoplasm. The catalysed reaction is 2 D-alanine + ATP = D-alanyl-D-alanine + ADP + phosphate + H(+). Its pathway is cell wall biogenesis; peptidoglycan biosynthesis. Its function is as follows. Cell wall formation. The polypeptide is D-alanine--D-alanine ligase (Trichormus variabilis (strain ATCC 29413 / PCC 7937) (Anabaena variabilis)).